The chain runs to 1014 residues: UvrABC system protein A (1014 aa).

Gly-32–Ser-39 is a binding site for ATP. ABC transporter domains are found at residues Trp-314 to Gln-592 and Gln-612 to Arg-941. Gly-645–Ser-652 provides a ligand contact to ATP. The segment at Cys-744–Cys-770 adopts a C4-type zinc-finger fold. Residues Thr-976 to Thr-995 show a composition bias toward low complexity. Positions Thr-976 to Ala-1014 are disordered. The span at Ala-996–Ala-1014 shows a compositional bias: basic residues.

Belongs to the ABC transporter superfamily. UvrA family. In terms of assembly, forms a heterotetramer with UvrB during the search for lesions.

It localises to the cytoplasm. In terms of biological role, the UvrABC repair system catalyzes the recognition and processing of DNA lesions. UvrA is an ATPase and a DNA-binding protein. A damage recognition complex composed of 2 UvrA and 2 UvrB subunits scans DNA for abnormalities. When the presence of a lesion has been verified by UvrB, the UvrA molecules dissociate. In Streptomyces coelicolor (strain ATCC BAA-471 / A3(2) / M145), this protein is UvrABC system protein A.